The chain runs to 200 residues: Ras-related protein Rab5 (200 aa).

Residues Gly17–Ser25, Leu36–Thr42, Asp65–Gln69, Asn123–Asp126, and Ser153–Lys155 each bind GTP. An Effector region motif is present at residues Gln39–Phe47. 2 S-geranylgeranyl cysteine lipidation sites follow: Cys198 and Cys199.

This sequence belongs to the small GTPase superfamily. Rab family. In terms of tissue distribution, virtually not expressed in leaves, higher in stems and roots, and highest in flowers.

The protein resides in the cell membrane. In terms of biological role, protein transport. Probably involved in vesicular traffic. The sequence is that of Ras-related protein Rab5 (RAB5) from Nicotiana tabacum (Common tobacco).